A 152-amino-acid polypeptide reads, in one-letter code: Protein NrdI (152 aa).

It belongs to the NrdI family.

Probably involved in ribonucleotide reductase function. The polypeptide is Protein NrdI (Rhodococcus opacus (strain B4)).